The chain runs to 462 residues: uncharacterized protein (462 aa).

2 consecutive transmembrane segments (helical) span residues Trp-12–Val-32 and Gly-257–Val-277.

This sequence belongs to the HHV-5 US29 protein family.

Its subcellular location is the host membrane. This is an uncharacterized protein from Homo sapiens (Human).